The following is a 311-amino-acid chain: tRNA-cytidine(32) 2-sulfurtransferase (311 aa).

A PP-loop motif motif is present at residues 47 to 52 (SGGKDS). [4Fe-4S] cluster is bound by residues C122, C125, and C213.

This sequence belongs to the TtcA family. As to quaternary structure, homodimer. Mg(2+) serves as cofactor. It depends on [4Fe-4S] cluster as a cofactor.

It is found in the cytoplasm. It catalyses the reaction cytidine(32) in tRNA + S-sulfanyl-L-cysteinyl-[cysteine desulfurase] + AH2 + ATP = 2-thiocytidine(32) in tRNA + L-cysteinyl-[cysteine desulfurase] + A + AMP + diphosphate + H(+). The protein operates within tRNA modification. Its function is as follows. Catalyzes the ATP-dependent 2-thiolation of cytidine in position 32 of tRNA, to form 2-thiocytidine (s(2)C32). The sulfur atoms are provided by the cysteine/cysteine desulfurase (IscS) system. This is tRNA-cytidine(32) 2-sulfurtransferase from Salmonella dublin (strain CT_02021853).